Here is a 575-residue protein sequence, read N- to C-terminus: Serine/threonine-protein kinase STY46 (575 aa).

A disordered region spans residues alanine 116–alanine 140. Residues leucine 118–arginine 132 show a composition bias toward polar residues. The region spanning glutamate 178–tryptophan 252 is the ACT domain. The Protein kinase domain maps to leucine 290 to alanine 543. ATP is bound by residues isoleucine 296–leucine 304 and lysine 317. Aspartate 411 acts as the Proton acceptor in catalysis. A Phosphothreonine modification is found at threonine 443.

The protein belongs to the protein kinase superfamily. Ser/Thr protein kinase family. In terms of processing, autophosphorylated on serine and threonine residues. Autophosphorylated at Thr-443.

The protein localises to the cytoplasm. The protein resides in the cytosol. It catalyses the reaction L-seryl-[protein] + ATP = O-phospho-L-seryl-[protein] + ADP + H(+). The enzyme catalyses L-threonyl-[protein] + ATP = O-phospho-L-threonyl-[protein] + ADP + H(+). Its activity is regulated as follows. Activated by autophosphorylation at Thr-443. Its function is as follows. Serine/threonine protein kinase that specifically phosphorylates chloroplast precursor proteins in the cytosol within the cleavable presequences (transit peptides). May be part of a cytosolic regulatory network involved in chloroplast protein import. Does not phosphorylate mitochondrion precursor proteins. Specific for ATP and does not utilize other NTPs. Plays a role in chloroplast biogenesis and differentiation in cotyledons, possibly through phosphorylation of chloroplast preproteins. This is Serine/threonine-protein kinase STY46 from Arabidopsis thaliana (Mouse-ear cress).